A 585-amino-acid chain; its full sequence is Aspartate--tRNA ligase (585 aa).

Residue Glu-173 participates in L-aspartate binding. Residues 197-200 (QTLK) are aspartate. Arg-219 serves as a coordination point for L-aspartate. Residues 219 to 221 (RDE) and Gln-228 each bind ATP. His-446 provides a ligand contact to L-aspartate. Glu-480 provides a ligand contact to ATP. Arg-487 serves as a coordination point for L-aspartate. Residue 532-535 (GLDR) participates in ATP binding.

This sequence belongs to the class-II aminoacyl-tRNA synthetase family. Type 1 subfamily. As to quaternary structure, homodimer.

It localises to the cytoplasm. The enzyme catalyses tRNA(Asp) + L-aspartate + ATP = L-aspartyl-tRNA(Asp) + AMP + diphosphate. Its function is as follows. Catalyzes the attachment of L-aspartate to tRNA(Asp) in a two-step reaction: L-aspartate is first activated by ATP to form Asp-AMP and then transferred to the acceptor end of tRNA(Asp). This chain is Aspartate--tRNA ligase, found in Bacteroides fragilis (strain YCH46).